The chain runs to 275 residues: NH(3)-dependent NAD(+) synthetase (275 aa).

Residue 46–53 (GISGGQDS) coordinates ATP. Residue aspartate 52 participates in Mg(2+) binding. Arginine 140 contributes to the deamido-NAD(+) binding site. Residue threonine 160 coordinates ATP. Glutamate 165 is a Mg(2+) binding site. Lysine 173 and aspartate 180 together coordinate deamido-NAD(+). ATP-binding residues include lysine 189 and threonine 211. A deamido-NAD(+)-binding site is contributed by 260-261 (HK).

Belongs to the NAD synthetase family. Homodimer.

The catalysed reaction is deamido-NAD(+) + NH4(+) + ATP = AMP + diphosphate + NAD(+) + H(+). It functions in the pathway cofactor biosynthesis; NAD(+) biosynthesis; NAD(+) from deamido-NAD(+) (ammonia route): step 1/1. In terms of biological role, catalyzes the ATP-dependent amidation of deamido-NAD to form NAD. Uses ammonia as a nitrogen source. The chain is NH(3)-dependent NAD(+) synthetase from Escherichia coli O157:H7.